The chain runs to 240 residues: Phosphatidylserine decarboxylase proenzyme (240 aa).

Catalysis depends on serine 209, which acts as the Schiff-base intermediate with substrate; via pyruvic acid. A Pyruvic acid (Ser); by autocatalysis modification is found at serine 209.

The protein belongs to the phosphatidylserine decarboxylase family. PSD-A subfamily. Heterodimer of a large membrane-associated beta subunit and a small pyruvoyl-containing alpha subunit. Requires pyruvate as cofactor. Post-translationally, is synthesized initially as an inactive proenzyme. Formation of the active enzyme involves a self-maturation process in which the active site pyruvoyl group is generated from an internal serine residue via an autocatalytic post-translational modification. Two non-identical subunits are generated from the proenzyme in this reaction, and the pyruvate is formed at the N-terminus of the alpha chain, which is derived from the carboxyl end of the proenzyme. The post-translation cleavage follows an unusual pathway, termed non-hydrolytic serinolysis, in which the side chain hydroxyl group of the serine supplies its oxygen atom to form the C-terminus of the beta chain, while the remainder of the serine residue undergoes an oxidative deamination to produce ammonia and the pyruvoyl prosthetic group on the alpha chain.

The protein localises to the cell membrane. The enzyme catalyses a 1,2-diacyl-sn-glycero-3-phospho-L-serine + H(+) = a 1,2-diacyl-sn-glycero-3-phosphoethanolamine + CO2. It functions in the pathway phospholipid metabolism; phosphatidylethanolamine biosynthesis; phosphatidylethanolamine from CDP-diacylglycerol: step 2/2. Its function is as follows. Catalyzes the formation of phosphatidylethanolamine (PtdEtn) from phosphatidylserine (PtdSer). The polypeptide is Phosphatidylserine decarboxylase proenzyme (Mycobacterium avium (strain 104)).